We begin with the raw amino-acid sequence, 455 residues long: Chromosomal replication initiator protein DnaA (455 aa).

The domain I, interacts with DnaA modulators stretch occupies residues 1 to 74 (MFNFEKFWQH…IQSAYGYAGV (74 aa)). The domain II stretch occupies residues 74 to 117 (VELLPVFQISEDSDTPERIVTPEPQHNLQTTPTRAPQREFAKDL). The domain III, AAA+ region stretch occupies residues 118 to 334 (KLNEKYTFDN…GALVKVQAYA (217 aa)). The ATP site is built by Gly162, Gly164, Lys165, and Thr166. The segment at 335 to 455 (TIEKADIDIN…VFDLKQMLEH (121 aa)) is domain IV, binds dsDNA.

It belongs to the DnaA family. Oligomerizes as a right-handed, spiral filament on DNA at oriC.

The protein resides in the cytoplasm. Its function is as follows. Plays an essential role in the initiation and regulation of chromosomal replication. ATP-DnaA binds to the origin of replication (oriC) to initiate formation of the DNA replication initiation complex once per cell cycle. Binds the DnaA box (a 9 base pair repeat at the origin) and separates the double-stranded (ds)DNA. Forms a right-handed helical filament on oriC DNA; dsDNA binds to the exterior of the filament while single-stranded (ss)DNA is stabiized in the filament's interior. The ATP-DnaA-oriC complex binds and stabilizes one strand of the AT-rich DNA unwinding element (DUE), permitting loading of DNA polymerase. After initiation quickly degrades to an ADP-DnaA complex that is not apt for DNA replication. Binds acidic phospholipids. The sequence is that of Chromosomal replication initiator protein DnaA from Lactobacillus acidophilus (strain ATCC 700396 / NCK56 / N2 / NCFM).